The primary structure comprises 498 residues: ATP synthase subunit beta, chloroplastic (498 aa).

172–179 is an ATP binding site; the sequence is GGAGVGKT.

It belongs to the ATPase alpha/beta chains family. In terms of assembly, F-type ATPases have 2 components, CF(1) - the catalytic core - and CF(0) - the membrane proton channel. CF(1) has five subunits: alpha(3), beta(3), gamma(1), delta(1), epsilon(1). CF(0) has four main subunits: a(1), b(1), b'(1) and c(9-12).

Its subcellular location is the plastid. The protein resides in the chloroplast thylakoid membrane. It carries out the reaction ATP + H2O + 4 H(+)(in) = ADP + phosphate + 5 H(+)(out). Functionally, produces ATP from ADP in the presence of a proton gradient across the membrane. The catalytic sites are hosted primarily by the beta subunits. The chain is ATP synthase subunit beta, chloroplastic from Phaseolus vulgaris (Kidney bean).